A 291-amino-acid polypeptide reads, in one-letter code: Pyridoxal 5'-phosphate synthase subunit PdxS (291 aa).

D23 contributes to the D-ribose 5-phosphate binding site. Catalysis depends on K80, which acts as the Schiff-base intermediate with D-ribose 5-phosphate. Residue G152 participates in D-ribose 5-phosphate binding. A D-glyceraldehyde 3-phosphate-binding site is contributed by R164. Residues G213 and G234–S235 contribute to the D-ribose 5-phosphate site.

It belongs to the PdxS/SNZ family. In the presence of PdxT, forms a dodecamer of heterodimers.

The enzyme catalyses aldehydo-D-ribose 5-phosphate + D-glyceraldehyde 3-phosphate + L-glutamine = pyridoxal 5'-phosphate + L-glutamate + phosphate + 3 H2O + H(+). The protein operates within cofactor biosynthesis; pyridoxal 5'-phosphate biosynthesis. Catalyzes the formation of pyridoxal 5'-phosphate from ribose 5-phosphate (RBP), glyceraldehyde 3-phosphate (G3P) and ammonia. The ammonia is provided by the PdxT subunit. Can also use ribulose 5-phosphate and dihydroxyacetone phosphate as substrates, resulting from enzyme-catalyzed isomerization of RBP and G3P, respectively. The sequence is that of Pyridoxal 5'-phosphate synthase subunit PdxS from Clostridium acetobutylicum (strain ATCC 824 / DSM 792 / JCM 1419 / IAM 19013 / LMG 5710 / NBRC 13948 / NRRL B-527 / VKM B-1787 / 2291 / W).